Consider the following 320-residue polypeptide: G-protein coupled receptor homolog FPV021 (320 aa).

The Extracellular portion of the chain corresponds to 1 to 18 (MDTDYGTVHTQQSVKGNT). A helical membrane pass occupies residues 19 to 39 (LILLIYFISFIVGFPGNCTVI). Over 40-52 (WFTGYRWKKSVTT) the chain is Cytoplasmic. The helical transmembrane segment at 53 to 73 (IWFLNLAIADTLFVIFIPFEI) threads the bilayer. The Extracellular portion of the chain corresponds to 74-91 (TYILMGHYWPFGLFVCRI). Cys-89 and Cys-167 are oxidised to a cystine. A helical membrane pass occupies residues 92–112 (GSLMFNTGMYASIFFLTFISI). The Cytoplasmic segment spans residues 113-133 (DRYCLAFRRDICNKYRYRINI). The helical transmembrane segment at 134–154 (MVMIIISWIISILLSTPYMYF) threads the bilayer. The Extracellular segment spans residues 155–188 (KNTNEKYRNNRDCLEDYHSDNNTYLLRRVVFCIS). N-linked (GlcNAc...) asparagine; by host glycosylation occurs at Asn-175. Residues 189 to 209 (LVMRYLVPSVVMLFCYCLLLF) traverse the membrane as a helical segment. The Cytoplasmic portion of the chain corresponds to 210–222 (KHSLFLSKGQTYT). A helical transmembrane segment spans residues 223–243 (IVIMITSFMVLWTPYNILYFI). Topologically, residues 244 to 260 (DVIGSHYYNADTIIDAA) are extracellular. The helical transmembrane segment at 261 to 281 (PISISLIFLSSSINPMIYMLV) threads the bilayer. The Cytoplasmic portion of the chain corresponds to 282 to 320 (GRYVSFENYSMRESLKLILSEERDNQTNHENEIKMENIN).

Belongs to the G-protein coupled receptor 1 family.

The protein resides in the host cell membrane. The polypeptide is G-protein coupled receptor homolog FPV021 (Vertebrata (FPV)).